The sequence spans 418 residues: Staphyloferrin B transporter (418 aa).

10 helical membrane-spanning segments follow: residues 19 to 39 (FIAI…MASL), 49 to 69 (LWSG…SPIW), 88 to 108 (GLAV…FVLV), 163 to 183 (ILGF…VCIF), 222 to 242 (FIIV…ALSP), 257 to 277 (VIGF…PLWG), 287 to 307 (SVYI…GLAT), 317 to 337 (ILQG…VVNA), 353 to 373 (MLVV…SYTT), and 377 to 397 (TFIV…CSTI).

This sequence belongs to the major facilitator superfamily.

Its subcellular location is the cell membrane. In terms of biological role, involved in staphyloferrin B secretion. This is Staphyloferrin B transporter from Staphylococcus aureus (strain NCTC 8325 / PS 47).